The primary structure comprises 316 residues: Beta-ketoacyl-[acyl-carrier-protein] synthase III 1 (316 aa).

Catalysis depends on residues Cys-112 and His-243. The ACP-binding stretch occupies residues Gln-244–Arg-248. Residue Asn-273 is part of the active site.

This sequence belongs to the thiolase-like superfamily. FabH family. Homodimer.

It is found in the cytoplasm. It catalyses the reaction malonyl-[ACP] + acetyl-CoA + H(+) = 3-oxobutanoyl-[ACP] + CO2 + CoA. It participates in lipid metabolism; fatty acid biosynthesis. Functionally, catalyzes the condensation reaction of fatty acid synthesis by the addition to an acyl acceptor of two carbons from malonyl-ACP. Catalyzes the first condensation reaction which initiates fatty acid synthesis and may therefore play a role in governing the total rate of fatty acid production. Possesses both acetoacetyl-ACP synthase and acetyl transacylase activities. Its substrate specificity determines the biosynthesis of branched-chain and/or straight-chain of fatty acids. The polypeptide is Beta-ketoacyl-[acyl-carrier-protein] synthase III 1 (Vibrio vulnificus (strain YJ016)).